The following is a 225-amino-acid chain: NAD(P)H-quinone oxidoreductase subunit K, chloroplastic (225 aa).

[4Fe-4S] cluster is bound by residues Cys43, Cys44, Cys108, and Cys139.

This sequence belongs to the complex I 20 kDa subunit family. As to quaternary structure, NDH is composed of at least 16 different subunits, 5 of which are encoded in the nucleus. Requires [4Fe-4S] cluster as cofactor.

It is found in the plastid. It localises to the chloroplast thylakoid membrane. It catalyses the reaction a plastoquinone + NADH + (n+1) H(+)(in) = a plastoquinol + NAD(+) + n H(+)(out). It carries out the reaction a plastoquinone + NADPH + (n+1) H(+)(in) = a plastoquinol + NADP(+) + n H(+)(out). Functionally, NDH shuttles electrons from NAD(P)H:plastoquinone, via FMN and iron-sulfur (Fe-S) centers, to quinones in the photosynthetic chain and possibly in a chloroplast respiratory chain. The immediate electron acceptor for the enzyme in this species is believed to be plastoquinone. Couples the redox reaction to proton translocation, and thus conserves the redox energy in a proton gradient. This chain is NAD(P)H-quinone oxidoreductase subunit K, chloroplastic, found in Lactuca sativa (Garden lettuce).